Here is a 70-residue protein sequence, read N- to C-terminus: Small ribosomal subunit protein bS21 (70 aa).

The protein belongs to the bacterial ribosomal protein bS21 family.

This is Small ribosomal subunit protein bS21 (rpsU) from Helicobacter pylori (strain J99 / ATCC 700824) (Campylobacter pylori J99).